Here is a 292-residue protein sequence, read N- to C-terminus: NAD kinase (292 aa).

Residue aspartate 73 is the Proton acceptor of the active site. NAD(+) is bound by residues 73–74 (DG), 147–148 (NE), histidine 158, arginine 175, aspartate 177, 188–193 (TAYSLS), and glutamine 247.

The protein belongs to the NAD kinase family. Requires a divalent metal cation as cofactor.

It localises to the cytoplasm. The enzyme catalyses NAD(+) + ATP = ADP + NADP(+) + H(+). In terms of biological role, involved in the regulation of the intracellular balance of NAD and NADP, and is a key enzyme in the biosynthesis of NADP. Catalyzes specifically the phosphorylation on 2'-hydroxyl of the adenosine moiety of NAD to yield NADP. The protein is NAD kinase of Pectobacterium atrosepticum (strain SCRI 1043 / ATCC BAA-672) (Erwinia carotovora subsp. atroseptica).